Consider the following 117-residue polypeptide: Large ribosomal subunit protein uL18 (117 aa).

The protein belongs to the universal ribosomal protein uL18 family. Part of the 50S ribosomal subunit; part of the 5S rRNA/L5/L18/L25 subcomplex. Contacts the 5S and 23S rRNAs.

Its function is as follows. This is one of the proteins that bind and probably mediate the attachment of the 5S RNA into the large ribosomal subunit, where it forms part of the central protuberance. This Haemophilus ducreyi (strain 35000HP / ATCC 700724) protein is Large ribosomal subunit protein uL18.